A 215-amino-acid chain; its full sequence is Protein GET1 (215 aa).

Residues 1–4 (MINL) lie on the Lumenal side of the membrane. A helical membrane pass occupies residues 5–24 (ALVIFLCTLLNQIVSWVGKS). Topologically, residues 25–108 (VLQEIAFTAY…SFSKKFSTLL (84 aa)) are cytoplasmic. A coiled-coil region spans residues 73–94 (AKLRRKLDKGLADLEKTNNTLS). Residues 109–129 (WLMTTGAQFLLSWWFRKQPIF) traverse the membrane as a helical segment. The Lumenal portion of the chain corresponds to 130-153 (WLPEGWVPYPVAWLLSFPSAPIGS). The chain crosses the membrane as a helical span at residues 154–170 (VSSGAWGAICRRVLSTL). Topologically, residues 171–215 (QEIIQSVLAPSPAATGPVPTGPSSAKNDQPEAKIEALALEHEKLD) are cytoplasmic. The segment at 181–202 (SPAATGPVPTGPSSAKNDQPEA) is disordered.

It belongs to the WRB/GET1 family. As to quaternary structure, interacts with GET3.

The protein resides in the endoplasmic reticulum membrane. Its function is as follows. Required for the post-translational delivery of tail-anchored (TA) proteins to the endoplasmic reticulum. Acts as a membrane receptor for soluble GET3, which recognizes and selectively binds the transmembrane domain of TA proteins in the cytosol. This Cryptococcus neoformans var. neoformans serotype D (strain B-3501A) (Filobasidiella neoformans) protein is Protein GET1.